The chain runs to 456 residues: Elongator complex protein 4 (456 aa).

Over residues 1 to 11 (MSFRKRGEILN) the composition is skewed to basic and acidic residues. The interval 1 to 91 (MSFRKRGEIL…SQPTTSTGSA (91 aa)) is disordered. Omega-N-methylarginine is present on R13. The span at 18 to 27 (RGPLLRGPPR) shows a compositional bias: low complexity. Positions 57–66 (NIADESKTKM) are enriched in basic and acidic residues. Residues 77–90 (PSPATSQPTTSTGS) show a composition bias toward low complexity. S222 is modified (phosphoserine). Positions 424–444 (EGSAASEQSHSHSHSDEISHN) are disordered. Residues 432–442 (SHSHSHSDEIS) are compositionally biased toward basic and acidic residues.

The protein belongs to the ELP4 family. As to quaternary structure, component of the elongator complex which consists of ELP1/IKI3, ELP2, ELP3, ELP4, ELP5/IKI1 and ELP6. The elongator complex is composed of two copies of the Elp123 subcomplex (composed of ELP1/IKI3, ELP2 and ELP3) and two copies of the Elp456 subcomplex (composed of ELP4, ELP5/IKI1 and ELP6). The Elp123 subcomplex forms a two-lobed scaffold, which binds the Elp456 subcomplex asymmetrically. In each lobe, ELP2 is tightly sandwiched between ELP1/IKI3 and ELP3. The Elp123 subcomplex binds tRNA through ELP1/IKI3 and ELP3 and can bind 2 tRNAs simultaneously. tRNA-binding by the Elp123 subcomplex induces conformational rearrangements which precisely position the targeted anticodon base in the active site. The Elp456 subcomplex binds tRNA and has ATPase activity. ELP4 interacts with KTI12.

Its subcellular location is the cytoplasm. It is found in the nucleus. It participates in tRNA modification; 5-methoxycarbonylmethyl-2-thiouridine-tRNA biosynthesis. Functionally, component of the elongator complex, a multiprotein complex which is required for multiple tRNA modifications, including mcm5U (5-methoxycarbonylmethyl uridine), mcm5s2U (5-methoxycarbonylmethyl-2-thiouridine), and ncm5U (5-carbamoylmethyl uridine). The elongator complex catalyzes formation of carboxymethyluridine in the wobble base at position 34 in tRNAs. It functions as a gamma-toxin target (TOT); disruption of the complex confers resistance to Kluyveromyces lactis toxin zymocin (pGKL1 killer toxin). May also be involved in sensitivity to Pichia inositovora toxin. The sequence is that of Elongator complex protein 4 from Saccharomyces cerevisiae (strain ATCC 204508 / S288c) (Baker's yeast).